Reading from the N-terminus, the 651-residue chain is UvrABC system protein C (651 aa).

In terms of domain architecture, GIY-YIG spans 20–97 (ERCGVYRMFD…IKKFQPKFNI (78 aa)). The UVR domain occupies 207-242 (KALQENLSKKMEELSSQMRFEEAAEIRDRIKALSYV).

This sequence belongs to the UvrC family. In terms of assembly, interacts with UvrB in an incision complex.

The protein localises to the cytoplasm. Its function is as follows. The UvrABC repair system catalyzes the recognition and processing of DNA lesions. UvrC both incises the 5' and 3' sides of the lesion. The N-terminal half is responsible for the 3' incision and the C-terminal half is responsible for the 5' incision. In Rickettsia akari (strain Hartford), this protein is UvrABC system protein C.